We begin with the raw amino-acid sequence, 360 residues long: Peptide chain release factor 1 (360 aa).

Glutamine 235 bears the N5-methylglutamine mark.

Belongs to the prokaryotic/mitochondrial release factor family. Methylated by PrmC. Methylation increases the termination efficiency of RF1.

It is found in the cytoplasm. Its function is as follows. Peptide chain release factor 1 directs the termination of translation in response to the peptide chain termination codons UAG and UAA. The chain is Peptide chain release factor 1 from Burkholderia multivorans (strain ATCC 17616 / 249).